Here is a 1507-residue protein sequence, read N- to C-terminus: Chromatin-remodeling ATPase INO80 (1507 aa).

Disordered stretches follow at residues 30 to 82 (PEDE…DAED) and 428 to 452 (RKKQ…KRQQ). Over residues 38–67 (GSSSQDESRSTQGGVVANYSNGSKSRMNAS) the composition is skewed to polar residues. Residues 350-475 (AWINIVRRDI…SHFMQNKTDS (126 aa)) enclose the DBINO domain. Residues 428–450 (RKKQEKEAAEAFKREQEQRESKR) show a composition bias toward basic and acidic residues. A Helicase ATP-binding domain is found at 598 to 769 (VNCYEQGLNG…WALLHFIMPM (172 aa)). Residue 611 to 618 (DEMGLGKT) coordinates ATP. One can recognise a Helicase C-terminal domain in the interval 1210-1360 (TLDILLKRLR…QLVMTGGHVQ (151 aa)). The disordered stretch occupies residues 1415–1507 (LEELEDVDRQ…KGFDPSSSAN (93 aa)). Residues 1491-1507 (ASVTESNKGFDPSSSAN) show a composition bias toward polar residues.

This sequence belongs to the SNF2/RAD54 helicase family. In terms of assembly, component of the INO80 chromatin-remodeling complex. Associates with REF6/EIN6.

Its subcellular location is the nucleus. It catalyses the reaction ATP + H2O = ADP + phosphate + H(+). Its function is as follows. ATPase component of the chromatin remodeling INO80 complex which is involved in transcriptional regulation, DNA replication and DNA repair. Binds DNA. As part of the INO80 complex, remodels chromatin by shifting nucleosomes. The INO80 complex controls ethylene-induced H2A.Z eviction dynamics. Positive regulator of homologous recombination, but not an essential component of homologous recombination. Not involved in the illegitimate repair pathway. In Arabidopsis thaliana (Mouse-ear cress), this protein is Chromatin-remodeling ATPase INO80.